A 479-amino-acid chain; its full sequence is Cardiolipin synthase A (479 aa).

2 helical membrane-spanning segments follow: residues 8–28 (FFGYLIGLIHLLGIIAALHAV) and 38–58 (IAWALSLLFIPYFTLIPYLIF). PLD phosphodiesterase domains follow at residues 218-245 (VNFRNHRKIVVVDGLRGFLGGHNVGDEY) and 392-419 (QPGFLHQKVVLVDDEVSAIGSANLDNRS). Catalysis depends on residues His-223, Lys-225, Asp-230, His-397, Lys-399, and Asp-404.

The protein belongs to the phospholipase D family. Cardiolipin synthase subfamily. ClsA sub-subfamily.

The protein localises to the cell inner membrane. It carries out the reaction 2 a 1,2-diacyl-sn-glycero-3-phospho-(1'-sn-glycerol) = a cardiolipin + glycerol. In terms of biological role, catalyzes the reversible phosphatidyl group transfer from one phosphatidylglycerol molecule to another to form cardiolipin (CL) (diphosphatidylglycerol) and glycerol. This chain is Cardiolipin synthase A, found in Pseudomonas entomophila (strain L48).